We begin with the raw amino-acid sequence, 243 residues long: Probable transcriptional regulator ycf27 (243 aa).

In terms of domain architecture, Response regulatory spans 7–120 (KILVVDDEAS…ELEARIRSVL (114 aa)). Asp56 carries the 4-aspartylphosphate modification. Positions 76–94 (DVPIIMLTALGEVCDRITG) form a DNA-binding region, H-T-H motif. A DNA-binding region (ompR/PhoB-type) is located at residues 135 to 236 (SGIISIGFLK…ARGTGYLFQR (102 aa)).

Its subcellular location is the plastid. It localises to the chloroplast. In terms of biological role, probable promoter-specific protein mediating the interaction between DNA and RNA polymerase. In Pyropia yezoensis (Susabi-nori), this protein is Probable transcriptional regulator ycf27 (ycf27).